The sequence spans 112 residues: MNDHLKRGNLLWEGSRMFLPEHKQSLLERKRLKQKLQKPILDPDKLEEMNQTLCAAMEFAQDITVSCFQDGEIVCCTGKICRYEEFEKAVWIKGDEDQLYKLKLDQVLDIVL.

This is an uncharacterized protein from Bacillus subtilis (strain 168).